A 100-amino-acid chain; its full sequence is Small ribosomal subunit protein uS14c (100 aa).

The protein belongs to the universal ribosomal protein uS14 family. As to quaternary structure, part of the 30S ribosomal subunit.

It localises to the plastid. The protein localises to the chloroplast. In terms of biological role, binds 16S rRNA, required for the assembly of 30S particles. The protein is Small ribosomal subunit protein uS14c of Lotus japonicus (Lotus corniculatus var. japonicus).